Consider the following 1268-residue polypeptide: ATP-dependent helicase/nuclease subunit A (1268 aa).

One can recognise a UvrD-like helicase ATP-binding domain in the interval 3-476; it reads TKWTEEQELA…IMLYKNFRSR (474 aa). 24–31 is a binding site for ATP; it reads AAAGSGKT. Residues 528-824 enclose the UvrD-like helicase C-terminal domain; sequence IENLKVAGDI…RIMSIHKSKG (297 aa).

It belongs to the helicase family. AddA subfamily. Heterodimer of AddA and AddB/RexB. The cofactor is Mg(2+).

It carries out the reaction Couples ATP hydrolysis with the unwinding of duplex DNA by translocating in the 3'-5' direction.. The enzyme catalyses ATP + H2O = ADP + phosphate + H(+). Functionally, the heterodimer acts as both an ATP-dependent DNA helicase and an ATP-dependent, dual-direction single-stranded exonuclease. Recognizes the chi site generating a DNA molecule suitable for the initiation of homologous recombination. The AddA nuclease domain is required for chi fragment generation; this subunit has the helicase and 3' -&gt; 5' nuclease activities. The sequence is that of ATP-dependent helicase/nuclease subunit A from Clostridium perfringens (strain 13 / Type A).